Consider the following 103-residue polypeptide: Large ribosomal subunit protein bL21 (103 aa).

The protein belongs to the bacterial ribosomal protein bL21 family. As to quaternary structure, part of the 50S ribosomal subunit. Contacts protein L20.

In terms of biological role, this protein binds to 23S rRNA in the presence of protein L20. In Pseudomonas syringae pv. syringae (strain B728a), this protein is Large ribosomal subunit protein bL21.